An 86-amino-acid chain; its full sequence is Bradykinin-potentiating peptide 25.12 (86 aa).

The signal sequence occupies residues 1-22 (MNKRVLLVIFFVTLLIADEVNS). Residues 67-86 (APAAAAAPEEPPVEQRRRRR) are disordered.

The protein belongs to the non-disulfide-bridged peptide (NDBP) superfamily. Long chain multifunctional peptide (group 2) family. Expressed by the venom gland.

It is found in the secreted. Functionally, inhibits angiotensin-converting enzyme (ACE), but does not serve as substrate for the enzyme. Potentiates bradykinin (BK) on the isolated guinea pig ileum as well as the isolated rat uterus for contraction. Also potentiates in vivo the depressor effect of BK on arterial blood pressure in the normotensive anesthetized rat. This Lychas mucronatus (Chinese swimming scorpion) protein is Bradykinin-potentiating peptide 25.12.